We begin with the raw amino-acid sequence, 86 residues long: Toxin Cn1 (86 aa).

A signal peptide spans 1–19 (MNSLLMITACFVLIGTVWA). The LCN-type CS-alpha/beta domain occupies 20–84 (KDGYLVDAKG…TWPLPNKTCS (65 aa)). Cystine bridges form between C30-C83, C34-C59, C43-C64, and C47-C66. S84 is subject to Serine amide.

The protein belongs to the long (4 C-C) scorpion toxin superfamily. Sodium channel inhibitor family. Beta subfamily. As to expression, expressed by the venom gland.

The protein localises to the secreted. In terms of biological role, beta toxins bind voltage-independently at site-4 of sodium channels (Nav) and shift the voltage of activation toward more negative potentials thereby affecting sodium channel activation and promoting spontaneous and repetitive firing. In Centruroides noxius (Mexican scorpion), this protein is Toxin Cn1.